A 166-amino-acid polypeptide reads, in one-letter code: uncharacterized protein (166 aa).

To C.perfringens pCP13 PCP12.

This is an uncharacterized protein from Clostridium perfringens.